The following is a 254-amino-acid chain: Anti-sigma-M factor RsmA (254 aa).

At 1–112 the chain is on the cytoplasmic side; it reads MSAADKDPDK…AARPHVHPVR (112 aa). The helical transmembrane segment at 113–133 threads the bilayer; that stretch reads MIAGAAGLCAVATAIGVGAVV. Over 134 to 254 the chain is Extracellular; that stretch reads DAPPPAPSAP…LLASTVVPRA (121 aa).

As to quaternary structure, interacts with ECF RNA polymerase sigma factor SigM; this should inhibit the interaction of SigM with the RNA polymerase catalytic core. In terms of processing, probably cleaved within the membrane by Rip1 near the cytoplasmic membrane interface.

The protein localises to the cell membrane. In terms of biological role, an anti-sigma factor for extracytoplasmic function (ECF) sigma factor SigM. ECF sigma factors are held in an inactive form by an anti-sigma factor until released by regulated intramembrane proteolysis (RIP). RIP occurs when an extracytoplasmic signal triggers a concerted proteolytic cascade to transmit information and elicit cellular responses. The membrane-spanning regulatory substrate protein is first cut extracytoplasmically (site-1 protease, S1P), then within the membrane itself (site-2 protease, S2P, Rip1), while cytoplasmic proteases finish degrading the regulatory protein, liberating the sigma factor. This chain is Anti-sigma-M factor RsmA (rsmA), found in Mycobacterium tuberculosis (strain ATCC 35801 / TMC 107 / Erdman).